A 137-amino-acid chain; its full sequence is Transcription antitermination protein NusB (137 aa).

This sequence belongs to the NusB family.

Involved in transcription antitermination. Required for transcription of ribosomal RNA (rRNA) genes. Binds specifically to the boxA antiterminator sequence of the ribosomal RNA (rrn) operons. This chain is Transcription antitermination protein NusB, found in Clavibacter michiganensis subsp. michiganensis (strain NCPPB 382).